The following is a 287-amino-acid chain: 4-hydroxybenzoate octaprenyltransferase (287 aa).

Transmembrane regions (helical) follow at residues 35–55, 96–116, 211–231, 235–255, and 262–282; these read FAAG…GVVV, LFGV…PLVV, IIAA…MLAG, IYGL…KLIY, and CFTA…ALTL.

It belongs to the UbiA prenyltransferase family. The cofactor is Mg(2+).

It is found in the cell inner membrane. It catalyses the reaction all-trans-octaprenyl diphosphate + 4-hydroxybenzoate = 4-hydroxy-3-(all-trans-octaprenyl)benzoate + diphosphate. The protein operates within cofactor biosynthesis; ubiquinone biosynthesis. Functionally, catalyzes the prenylation of para-hydroxybenzoate (PHB) with an all-trans polyprenyl group. Mediates the second step in the final reaction sequence of ubiquinone-8 (UQ-8) biosynthesis, which is the condensation of the polyisoprenoid side chain with PHB, generating the first membrane-bound Q intermediate 3-octaprenyl-4-hydroxybenzoate. This is 4-hydroxybenzoate octaprenyltransferase from Shewanella halifaxensis (strain HAW-EB4).